The sequence spans 1017 residues: Formin-binding protein 4 (1017 aa).

2 disordered regions span residues 1 to 141 (MGKK…STDI) and 160 to 202 (PAAP…TSGW). Residue S18 is modified to Phosphoserine. Positions 40–69 (DSTAAVPSQPAPSAATTTTTAVTAAAASDD) are enriched in low complexity. A phosphoserine mark is found at S116 and S124. A compositionally biased stretch (polar residues) spans 130-141 (SKETNGNQSTDI). T172 is subject to Phosphothreonine. The segment covering 181-200 (AATSTLSSSTSNGTDSTQTS) has biased composition (low complexity). The region spanning 214–248 (GIEMGDWQEVWDENTGCYYYWNTQTNEVTWELPQY) is the WW 1 domain. The residue at position 290 (K290) is an N6-acetyllysine. A Glycyl lysine isopeptide (Lys-Gly) (interchain with G-Cter in SUMO1) cross-link involves residue K301. K335 is covalently cross-linked (Glycyl lysine isopeptide (Lys-Gly) (interchain with G-Cter in SUMO2)). A Glycyl lysine isopeptide (Lys-Gly) (interchain with G-Cter in SUMO1); alternate cross-link involves residue K348. A Glycyl lysine isopeptide (Lys-Gly) (interchain with G-Cter in SUMO2); alternate cross-link involves residue K348. Disordered regions lie at residues 421–519 (LEEG…TTPK), 621–676 (ESQW…CKES), 706–792 (PLPL…IKRK), and 899–994 (TATI…AERN). 5 positions are modified to phosphoserine: S427, S432, S435, S438, and S442. Residues 428-442 (VSGSSPRSDISQPAS) are compositionally biased toward polar residues. Positions 449 to 458 (LMSKRGKWKM) are enriched in basic residues. Residues 461–474 (RATSPESTSRSSSK) are compositionally biased toward low complexity. The residue at position 464 (S464) is a Phosphoserine. T479 is modified (phosphothreonine). Basic and acidic residues predominate over residues 491–513 (NSEKIDENSDKEMEVEESPEKIK). 2 positions are modified to phosphoserine: S499 and S508. A phosphothreonine mark is found at T516 and T517. K519 participates in a covalent cross-link: Glycyl lysine isopeptide (Lys-Gly) (interchain with G-Cter in SUMO1); alternate. K519 is covalently cross-linked (Glycyl lysine isopeptide (Lys-Gly) (interchain with G-Cter in SUMO2); alternate). The region spanning 595–629 (NATPKGWSCHWDRDHRRYFYVNEQSGESQWEFPDG) is the WW 2 domain. Residues 627 to 637 (PDGEEEEEESQ) are compositionally biased toward acidic residues. Residues 640–656 (ENRDETLAKQTLKDKTG) are compositionally biased toward basic and acidic residues. Low complexity predominate over residues 657-671 (TDSNSTESSETSTGS). A compositionally biased stretch (pro residues) spans 706-732 (PLPLEMPPPPPPPPESPPPPPPPPPPA). Residues 733–748 (EDGEIQEVEMEDEGSE) are compositionally biased toward acidic residues. The span at 764 to 786 (SAQTTVVTSQSSVDSTISSSSST) shows a compositional bias: low complexity. The span at 904-925 (EPPPPPPPPPPPPPPAPKMPPP) shows a compositional bias: pro residues. Positions 929 to 941 (KKGRKDKAKKSKT) are enriched in basic residues. Over residues 957 to 970 (LDEEDNSSSSEEDR) the composition is skewed to acidic residues. Residues S963, S964, and S965 each carry the phosphoserine modification. The segment covering 971 to 982 (ESTAQKRIEEWK) has biased composition (basic and acidic residues).

Binds FMN1. Interacts with the Arg/Gly-rich-flanked Pro-rich of KHDRBS1/SAM68. Arginine methylation in these regions has no effect on this binding. In terms of tissue distribution, highly expressed in the eye.

The polypeptide is Formin-binding protein 4 (FNBP4) (Homo sapiens (Human)).